A 412-amino-acid polypeptide reads, in one-letter code: [Pyruvate dehydrogenase (acetyl-transferring)] kinase isozyme 4, mitochondrial (412 aa).

A Histidine kinase domain is found at Ile138–Ser368. Residues Glu254–Arg261, Asp293, Ser312–Thr313, and Gly329–Leu334 each bind ATP.

It belongs to the PDK/BCKDK protein kinase family. In terms of assembly, homodimer. Interacts with the pyruvate dehydrogenase complex subunit DLAT, and is part of the multimeric pyruvate dehydrogenase complex that contains multiple copies of pyruvate dehydrogenase (E1), dihydrolipoamide acetyltransferase (DLAT, E2) and lipoamide dehydrogenase (DLD, E3). As to expression, detected in heart, white adipose tissue and muscle.

It is found in the mitochondrion matrix. The catalysed reaction is L-seryl-[pyruvate dehydrogenase E1 alpha subunit] + ATP = O-phospho-L-seryl-[pyruvate dehydrogenase E1 alpha subunit] + ADP + H(+). In terms of biological role, kinase that plays a key role in regulation of glucose and fatty acid metabolism and homeostasis via phosphorylation of the pyruvate dehydrogenase subunits PDHA1 and PDHA2. This inhibits pyruvate dehydrogenase activity, and thereby regulates metabolite flux through the tricarboxylic acid cycle, down-regulates aerobic respiration and inhibits the formation of acetyl-coenzyme A from pyruvate. Inhibition of pyruvate dehydrogenase decreases glucose utilization and increases fat metabolism in response to prolonged fasting and starvation. Plays an important role in maintaining normal blood glucose levels under starvation, and is involved in the insulin signaling cascade. Via its regulation of pyruvate dehydrogenase activity, plays an important role in maintaining normal blood pH and in preventing the accumulation of ketone bodies under starvation. In the fed state, mediates cellular responses to glucose levels and to a high-fat diet. Regulates both fatty acid oxidation and de novo fatty acid biosynthesis. Plays a role in the generation of reactive oxygen species. Protects detached epithelial cells against anoikis. Plays a role in cell proliferation via its role in regulating carbohydrate and fatty acid metabolism. The chain is [Pyruvate dehydrogenase (acetyl-transferring)] kinase isozyme 4, mitochondrial (PDK4) from Rhinolophus ferrumequinum (Greater horseshoe bat).